We begin with the raw amino-acid sequence, 205 residues long: ATP phosphoribosyltransferase (205 aa).

This sequence belongs to the ATP phosphoribosyltransferase family. Short subfamily. Heteromultimer composed of HisG and HisZ subunits.

Its subcellular location is the cytoplasm. It carries out the reaction 1-(5-phospho-beta-D-ribosyl)-ATP + diphosphate = 5-phospho-alpha-D-ribose 1-diphosphate + ATP. It participates in amino-acid biosynthesis; L-histidine biosynthesis; L-histidine from 5-phospho-alpha-D-ribose 1-diphosphate: step 1/9. Its function is as follows. Catalyzes the condensation of ATP and 5-phosphoribose 1-diphosphate to form N'-(5'-phosphoribosyl)-ATP (PR-ATP). Has a crucial role in the pathway because the rate of histidine biosynthesis seems to be controlled primarily by regulation of HisG enzymatic activity. This Vesicomyosocius okutanii subsp. Calyptogena okutanii (strain HA) protein is ATP phosphoribosyltransferase.